The primary structure comprises 219 residues: Response regulator ArlR (219 aa).

In terms of domain architecture, Response regulatory spans 3-116 (NILIVEDEQN…ELLARIRAVL (114 aa)). A 4-aspartylphosphate modification is found at Asp52. The segment at residues 122 to 219 (KDVLDINGII…TVRGVGYVIR (98 aa)) is a DNA-binding region (ompR/PhoB-type).

Phosphorylated by ArlS.

Its subcellular location is the cytoplasm. In terms of biological role, member of the two-component regulatory system ArlS/ArlR. The polypeptide is Response regulator ArlR (arlR) (Staphylococcus epidermidis (strain ATCC 12228 / FDA PCI 1200)).